The following is a 6907-amino-acid chain: Fibrous sheath-interacting protein 2 (6907 aa).

The tract at residues 273-292 (EERIEEQQHRNREESDRKKQ) is disordered. Ser-430 carries the phosphoserine modification. 8 disordered regions span residues 439–472 (SQAFLDPSKEEKETNADWDGRPTKRSSYLCESGP), 954–990 (FQKSRQPRISSPSDTKEKYRLTGTRLSNSPRSGRPFP), 1545–1573 (VQEDNKEETKSKAKPVAPVSSKTPSTKEM), 3202–3257 (VSSD…FDQT), 5650–5672 (RTSSNEGRRDSPTQTCRDEEHHS), 5725–5781 (SAQS…KPGI), 5850–5880 (DKGNQFPGGKVSSVPKVPPRYKEPTTDEAPS), and 6852–6874 (GSANPSKEVISETPKPDVSKQGS). The segment covering 445 to 460 (PSKEEKETNADWDGRP) has biased composition (basic and acidic residues). Residues 954–966 (FQKSRQPRISSPS) are compositionally biased toward polar residues. 2 stretches are compositionally biased toward basic and acidic residues: residues 1545 to 1555 (VQEDNKEETKS) and 3213 to 3229 (SVEDTVKNSEPTKRPDS). Residues 5728–5741 (SVTTKKVSSSTNKN) show a composition bias toward low complexity. Residues 5738–5766 (TNKNISAKEKEEEEREKEKVREEIKSEPS) adopt a coiled-coil conformation. Residues 5743-5778 (SAKEKEEEEREKEKVREEIKSEPSKPDDPQNQRESK) show a composition bias toward basic and acidic residues.

May interact with AKAP4. In terms of tissue distribution, predominantly expressed in testis.

Plays a role in spermatogenesis. The protein is Fibrous sheath-interacting protein 2 (FSIP2) of Homo sapiens (Human).